The primary structure comprises 172 residues: Ribosome maturation factor RimM (172 aa).

In terms of domain architecture, PRC barrel spans 97 to 170 (ENEFYFHEII…KITIEVMEGL (74 aa)).

The protein belongs to the RimM family. Binds ribosomal protein uS19.

The protein resides in the cytoplasm. Functionally, an accessory protein needed during the final step in the assembly of 30S ribosomal subunit, possibly for assembly of the head region. Essential for efficient processing of 16S rRNA. May be needed both before and after RbfA during the maturation of 16S rRNA. It has affinity for free ribosomal 30S subunits but not for 70S ribosomes. The chain is Ribosome maturation factor RimM from Listeria monocytogenes serovar 1/2a (strain ATCC BAA-679 / EGD-e).